The following is a 750-amino-acid chain: MTQNLPQPPAVNAPENELDLVRYLDVLVANRWLIAGIAAAVMLLGAAYAFLARPVYEADIMVQVEDNPNSAKSLLGDVSSLFDVKTDANAEIEILRSRMVVGKAVDNLHLYITAKPRYFPLIGAWISSRATRLSEPGLFGLGGYVWGTESIDVDGFDVPEALEGQPFKLIVLGNGRYRLENKSLDAPIEGVVGEPLEAKQSIGTIQLQVNNLTAKAGATFELERDSRLKTMEMLQDKLKIAEKGKQSGIIGASLDGTNPALTAAIMNQIATEYVAQNIKRKAEEAERSLVFLDGLLPQLKLELERAEMKYNEMRNLRGTFDLSEEGKAFLQESVTVETSLQELKQKRAELLTRFTSSHPGVQAIDQQISVMSGKVNSMTRRLKSLPNIEQDTVRLMRDVQVDNELYVSLLNDMQQLKLVKAGKVGNVRLVDGAAVPEEPVKPKKLTVTPLAGVLGVVLGVMAAFVRNALFGGITDPQDIEEHTGLSVYATVPLSDTQVDLSGQLTTRKRGQYLLARRVPDDPSIEALRSLRTALQFAMQDAGNNLVVLTGPTPGVGKSFVSANLAAVIATGGKRVLLIDADMRKGYLHQYFGKDRKPGLLDLLAGNRSIEQVVHREVVPGLDFIATGLFPHNPSELLLNPRMVELMDTFRSQYDLVLVDTPPVLAVADTAILAARAGLVLLVTRFERSTLGEIRETIKQLQHANVDVRGVVFNALDPNTYRYGYGSRYGRYRYVQYGYTSNSKPPEAESA.

Topologically, residues 1–31 are cytoplasmic; the sequence is MTQNLPQPPAVNAPENELDLVRYLDVLVANR. The chain crosses the membrane as a helical span at residues 32–52; it reads WLIAGIAAAVMLLGAAYAFLA. Over 53–444 the chain is Periplasmic; sequence RPVYEADIMV…VPEEPVKPKK (392 aa). Residues 445–465 traverse the membrane as a helical segment; the sequence is LTVTPLAGVLGVVLGVMAAFV. Topologically, residues 466-750 are cytoplasmic; sequence RNALFGGITD…NSKPPEAESA (285 aa).

It belongs to the etk/wzc family.

The protein resides in the cell inner membrane. It catalyses the reaction L-tyrosyl-[protein] + ATP = O-phospho-L-tyrosyl-[protein] + ADP + H(+). Probably involved in polymerization and/or export of exopolysaccharide EPS I which functions as a virulence factor. May be involved in an ATP-dependent process in the pathway for EPS I production, possibly export of the trimeric repeat units across the inner membrane or their polymerization. The protein is Putative tyrosine-protein kinase EpsB (epsB) of Ralstonia solanacearum (Pseudomonas solanacearum).